An 80-amino-acid chain; its full sequence is Exodeoxyribonuclease 7 small subunit (80 aa).

It belongs to the XseB family. In terms of assembly, heterooligomer composed of large and small subunits.

It is found in the cytoplasm. The catalysed reaction is Exonucleolytic cleavage in either 5'- to 3'- or 3'- to 5'-direction to yield nucleoside 5'-phosphates.. Its function is as follows. Bidirectionally degrades single-stranded DNA into large acid-insoluble oligonucleotides, which are then degraded further into small acid-soluble oligonucleotides. This chain is Exodeoxyribonuclease 7 small subunit, found in Pseudomonas putida (strain W619).